The primary structure comprises 219 residues: Vesicle-associated membrane protein 712 (219 aa).

Topologically, residues Met-1–Lys-189 are cytoplasmic. Positions Leu-7 to Leu-111 constitute a Longin domain. The region spanning Thr-126–Arg-186 is the v-SNARE coiled-coil homology domain. The helical; Anchor for type IV membrane protein transmembrane segment at Leu-190–Cys-210 threads the bilayer. Residues His-211–Val-219 lie on the Vesicular side of the membrane.

This sequence belongs to the synaptobrevin family. Expressed in flowers, leaves, stems and roots.

It is found in the vacuole membrane. It localises to the prevacuolar compartment membrane. In terms of biological role, involved in the targeting and/or fusion of transport vesicles to their target membrane. The protein is Vesicle-associated membrane protein 712 of Arabidopsis thaliana (Mouse-ear cress).